A 200-amino-acid polypeptide reads, in one-letter code: Peptidyl-tRNA hydrolase (200 aa).

TRNA is bound at residue Y15. H20 acts as the Proton acceptor in catalysis. Y66, N68, and N114 together coordinate tRNA.

Belongs to the PTH family. Monomer.

The protein localises to the cytoplasm. It catalyses the reaction an N-acyl-L-alpha-aminoacyl-tRNA + H2O = an N-acyl-L-amino acid + a tRNA + H(+). In terms of biological role, hydrolyzes ribosome-free peptidyl-tRNAs (with 1 or more amino acids incorporated), which drop off the ribosome during protein synthesis, or as a result of ribosome stalling. Functionally, catalyzes the release of premature peptidyl moieties from peptidyl-tRNA molecules trapped in stalled 50S ribosomal subunits, and thus maintains levels of free tRNAs and 50S ribosomes. This is Peptidyl-tRNA hydrolase from Paraburkholderia phytofirmans (strain DSM 17436 / LMG 22146 / PsJN) (Burkholderia phytofirmans).